A 1207-amino-acid polypeptide reads, in one-letter code: DNA-directed RNA polymerase subunit beta' (1207 aa).

C60, C62, C75, and C78 together coordinate Zn(2+). Positions 450, 452, and 454 each coordinate Mg(2+). Zn(2+) contacts are provided by C819, C893, C900, and C903.

Belongs to the RNA polymerase beta' chain family. The RNAP catalytic core consists of 2 alpha, 1 beta, 1 beta' and 1 omega subunit. When a sigma factor is associated with the core the holoenzyme is formed, which can initiate transcription. The cofactor is Mg(2+). Requires Zn(2+) as cofactor.

The catalysed reaction is RNA(n) + a ribonucleoside 5'-triphosphate = RNA(n+1) + diphosphate. Functionally, DNA-dependent RNA polymerase catalyzes the transcription of DNA into RNA using the four ribonucleoside triphosphates as substrates. This Streptococcus pyogenes serotype M3 (strain SSI-1) protein is DNA-directed RNA polymerase subunit beta'.